The sequence spans 200 residues: Holliday junction branch migration complex subunit RuvA (200 aa).

Residues 1 to 64 (MIAHLTGLVG…EDAFLLYGFA (64 aa)) form a domain I region. Residues 65–143 (EAAERDWFRL…RMPAGPGVTI (79 aa)) form a domain II region. The segment at 144–147 (AAPP) is flexible linker. Residues 148-200 (ASGGVEADALLALAGLGFRRAEAQPVVGRILARLDGKADLDVVIRESLRELAR) are domain III.

It belongs to the RuvA family. In terms of assembly, homotetramer. Forms an RuvA(8)-RuvB(12)-Holliday junction (HJ) complex. HJ DNA is sandwiched between 2 RuvA tetramers; dsDNA enters through RuvA and exits via RuvB. An RuvB hexamer assembles on each DNA strand where it exits the tetramer. Each RuvB hexamer is contacted by two RuvA subunits (via domain III) on 2 adjacent RuvB subunits; this complex drives branch migration. In the full resolvosome a probable DNA-RuvA(4)-RuvB(12)-RuvC(2) complex forms which resolves the HJ.

Its subcellular location is the cytoplasm. In terms of biological role, the RuvA-RuvB-RuvC complex processes Holliday junction (HJ) DNA during genetic recombination and DNA repair, while the RuvA-RuvB complex plays an important role in the rescue of blocked DNA replication forks via replication fork reversal (RFR). RuvA specifically binds to HJ cruciform DNA, conferring on it an open structure. The RuvB hexamer acts as an ATP-dependent pump, pulling dsDNA into and through the RuvAB complex. HJ branch migration allows RuvC to scan DNA until it finds its consensus sequence, where it cleaves and resolves the cruciform DNA. The protein is Holliday junction branch migration complex subunit RuvA of Gluconacetobacter diazotrophicus (strain ATCC 49037 / DSM 5601 / CCUG 37298 / CIP 103539 / LMG 7603 / PAl5).